A 206-amino-acid polypeptide reads, in one-letter code: MTKSRAPKPPSDGTHPALGPLLTRWFFARSVHEVAPELIGATLLFGGAGGIIVEVEAYHHTDPAAHSYGGPTPRNQVMFGPPGFAYVYRSYGIHWCVNVVCEPEGSASAVLIRALEPTHGLAAMRKRRGLDEPRSLCSGPGKLAQALGITIADNGLPLDAAPFAIHRRTTTPEIVAGPRIGITKAADYPWRFGLKDSRFLSKPFPR.

It belongs to the DNA glycosylase MPG family.

The chain is Putative 3-methyladenine DNA glycosylase from Rhodopseudomonas palustris (strain ATCC BAA-98 / CGA009).